The following is a 154-amino-acid chain: Large-conductance mechanosensitive channel (154 aa).

Transmembrane regions (helical) follow at residues 16-36, 39-59, and 89-109; these read VLGL…ISSV, DLLM…GFFI, and GQFL…FMIM.

The protein belongs to the MscL family. Homopentamer.

It is found in the cell inner membrane. Its function is as follows. Channel that opens in response to stretch forces in the membrane lipid bilayer. May participate in the regulation of osmotic pressure changes within the cell. This chain is Large-conductance mechanosensitive channel, found in Zymomonas mobilis subsp. mobilis (strain ATCC 31821 / ZM4 / CP4).